The following is a 158-amino-acid chain: NADH-quinone oxidoreductase subunit B (158 aa).

[4Fe-4S] cluster-binding residues include Cys-37, Cys-38, Cys-102, and Cys-132.

It belongs to the complex I 20 kDa subunit family. NDH-1 is composed of 14 different subunits. Subunits NuoB, C, D, E, F, and G constitute the peripheral sector of the complex. The cofactor is [4Fe-4S] cluster.

It localises to the cell inner membrane. The catalysed reaction is a quinone + NADH + 5 H(+)(in) = a quinol + NAD(+) + 4 H(+)(out). Its function is as follows. NDH-1 shuttles electrons from NADH, via FMN and iron-sulfur (Fe-S) centers, to quinones in the respiratory chain. Couples the redox reaction to proton translocation (for every two electrons transferred, four hydrogen ions are translocated across the cytoplasmic membrane), and thus conserves the redox energy in a proton gradient. This chain is NADH-quinone oxidoreductase subunit B, found in Bordetella parapertussis (strain 12822 / ATCC BAA-587 / NCTC 13253).